The chain runs to 560 residues: Synaptotagmin-5 (560 aa).

Residues 2–22 (GFIVGVVIGLLVGIAIIIGFV) form a helical membrane-spanning segment. Residues 67–249 (ERQKLTWLNH…WPVRKVIPII (183 aa)) form the SMP-LTD domain. Residues 227-523 (EETIRDAVED…YIGRCILTLT (297 aa)) are phospholipid binding. 2 C2 domains span residues 243–364 (RKVI…DVWL) and 417–535 (TTDE…KDWY). 9 residues coordinate Ca(2+): Asp278, Asp284, Asp334, Glu336, Asp451, Asp457, Asp506, Asp508, and Asp513.

The protein belongs to the synaptotagmin family. Ca(2+) serves as cofactor.

It localises to the membrane. May be involved in membrane trafficking. The sequence is that of Synaptotagmin-5 (SYT5) from Arabidopsis thaliana (Mouse-ear cress).